Here is a 284-residue protein sequence, read N- to C-terminus: LVSTPWIELFNAFPSLLRHFPGSHNTIFKNMTEQRKFILEEIKKHQESLDLNNPQDFIDYFLIKMEKEKHNKHSEFTMDNLITTVWDVFSAGTETTSLTLRYGLLLLLKHPEVTAKVQEEIDRVVGRNRSPCMQDRSRMPYTDAVLHEIQRYIDLVPSNLPHVATQDVKFREYLIPKGTAILTSLTSVLHDGKEFPNPGQFDPAHFLDESGNFKKTDHFMAFSAGKRVCVGEGLARMELFLLLVSILQHFTLKPVVDPKHIDIAPSFKGMLSIPPFCEMCFIPV.

Cys229 lines the heme pocket.

This sequence belongs to the cytochrome P450 family. Heme is required as a cofactor.

It is found in the endoplasmic reticulum membrane. Its subcellular location is the microsome membrane. The enzyme catalyses an organic molecule + reduced [NADPH--hemoprotein reductase] + O2 = an alcohol + oxidized [NADPH--hemoprotein reductase] + H2O + H(+). In terms of biological role, cytochromes P450 are a group of heme-thiolate monooxygenases. In liver microsomes, this enzyme is involved in an NADPH-dependent electron transport pathway. It oxidizes a variety of structurally unrelated compounds, including steroids, fatty acids, and xenobiotics. The protein is Cytochrome P450 2C31 (CYP2C31) of Capra hircus aegagrus (Wild goat).